We begin with the raw amino-acid sequence, 90 residues long: UPF0297 protein Swol_0469 (90 aa).

The protein belongs to the UPF0297 family.

This chain is UPF0297 protein Swol_0469, found in Syntrophomonas wolfei subsp. wolfei (strain DSM 2245B / Goettingen).